A 244-amino-acid chain; its full sequence is Ubiquinone biosynthesis O-methyltransferase (244 aa).

S-adenosyl-L-methionine-binding residues include Arg-36, Gly-60, Asp-81, and Leu-123.

It belongs to the methyltransferase superfamily. UbiG/COQ3 family.

It catalyses the reaction a 3-demethylubiquinol + S-adenosyl-L-methionine = a ubiquinol + S-adenosyl-L-homocysteine + H(+). It carries out the reaction a 3-(all-trans-polyprenyl)benzene-1,2-diol + S-adenosyl-L-methionine = a 2-methoxy-6-(all-trans-polyprenyl)phenol + S-adenosyl-L-homocysteine + H(+). It functions in the pathway cofactor biosynthesis; ubiquinone biosynthesis. In terms of biological role, O-methyltransferase that catalyzes the 2 O-methylation steps in the ubiquinone biosynthetic pathway. In Rickettsia felis (strain ATCC VR-1525 / URRWXCal2) (Rickettsia azadi), this protein is Ubiquinone biosynthesis O-methyltransferase.